Here is a 270-residue protein sequence, read N- to C-terminus: MLGLQIFTLLSIPTLLYTYEIEPLERTSTPPEKEFGYWCTYANHCRFCWDCQDGICRNKAFKNHSPILENDYIANCSIYRRNDFCIYHITSIKPHKTYRTECPQHINHERHEADIRKWQKLLTYGFYLAGCILAVNYIRKRSLQTVMYLLVFLVISFLLSQLMLYGELEDKKHKIGSIPPKRELEHWCTHGKYCNFCWDCQNGICKNKAFKNHPPIGENDFIRYDCWTTHLPNKCSYEKIYKHFDTHIMECSQPTHFKWYDNLMKKQDIM.

Positions 1–26 (MLGLQIFTLLSIPTLLYTYEIEPLER) are cleaved as a signal peptide. Topologically, residues 27–117 (TSTPPEKEFG…HERHEADIRK (91 aa)) are extracellular. The A repeat unit spans residues 27-146 (TSTPPEKEFG…YIRKRSLQTV (120 aa)). Asn75 carries N-linked (GlcNAc...) asparagine; by host glycosylation. Residues 118–138 (WQKLLTYGFYLAGCILAVNYI) traverse the membrane as a helical segment. The Cytoplasmic portion of the chain corresponds to 139-145 (RKRSLQT). Residues 146–166 (VMYLLVFLVISFLLSQLMLYG) traverse the membrane as a helical segment. The B repeat unit spans residues 147 to 270 (MYLLVFLVIS…DNLMKKQDIM (124 aa)). Topologically, residues 167 to 270 (ELEDKKHKIG…DNLMKKQDIM (104 aa)) are extracellular.

The protein belongs to the asfivirus MGF 110 family.

It localises to the membrane. Plays a role in virus cell tropism, and may be required for efficient virus replication in macrophages. The sequence is that of Protein MGF 110-1L from African swine fever virus (isolate Pig/Portugal/OURT88/1988) (ASFV).